Reading from the N-terminus, the 467-residue chain is Protection of telomeres protein 1a (467 aa).

Belongs to the telombin family. Component of the telomerase holoenzyme complex at least composed of TERT, CBF5 and POT1a. The RNA molecule associated to the telomerase complex, and providing a template for telomeric DNA synthesis, is most likely TR and not TER1 as described previously. Interacts with the N-terminal part of TERT. Interacts with CBF5. Interacts with CTC1 and STN1. Does not interact with TEN1. Expressed in roots, rosette leaves, cauline leaves, stems and flowers.

The protein localises to the nucleus. It is found in the chromosome. The protein resides in the telomere. Its subcellular location is the nucleolus. It localises to the cytoplasm. Component of the telomerase ribonucleoprotein (RNP) complex that is essential for the positive regulation of telomere length. Binds RNA non-specifically. Binds specifically single-stranded telomeric DNA. Not required to recruit telomerase to telomeres, but stimulates TER1 RNP repeat addition processivity. The chain is Protection of telomeres protein 1a from Arabidopsis thaliana (Mouse-ear cress).